The sequence spans 78 residues: MSRICQITGKKPLSGNKRSHSMNAKKRKFFPNLHNHRFWLDKEKKFINLRISKQGLRLIDKYGIKKVMEKIKIKYKNV.

The disordered stretch occupies residues 1–23 (MSRICQITGKKPLSGNKRSHSMN).

It belongs to the bacterial ribosomal protein bL28 family.

This chain is Large ribosomal subunit protein bL28, found in Wigglesworthia glossinidia brevipalpis.